The primary structure comprises 70 residues: Cold shock-like protein CspI (70 aa).

In terms of domain architecture, CSD spans 7–67 (GLVKWFNPEK…GPKGPAAVHV (61 aa)).

The protein resides in the cytoplasm. In Escherichia coli O6:H1 (strain CFT073 / ATCC 700928 / UPEC), this protein is Cold shock-like protein CspI (cspI).